A 256-amino-acid polypeptide reads, in one-letter code: Flap endonuclease Xni (256 aa).

Asp-105 contacts Mg(2+). In terms of domain architecture, 5'-3' exonuclease spans 163 to 256; that stretch reads RSQLIDYLAL…QFRIKKPDSE (94 aa). K(+)-binding residues include Leu-172, Ala-173, Pro-181, Val-183, and Ile-186. An interaction with DNA region spans residues 185–190; that stretch reads GIGPKS.

It belongs to the Xni family. Mg(2+) is required as a cofactor. K(+) serves as cofactor.

Has flap endonuclease activity. During DNA replication, flap endonucleases cleave the 5'-overhanging flap structure that is generated by displacement synthesis when DNA polymerase encounters the 5'-end of a downstream Okazaki fragment. In Shewanella pealeana (strain ATCC 700345 / ANG-SQ1), this protein is Flap endonuclease Xni.